Consider the following 916-residue polypeptide: Rab3 GTPase-activating protein catalytic subunit (916 aa).

A disordered region spans residues 530 to 574 (NSKRKSEGMVGKASSEEEEDEDDDEGEFFDCDDLTAGAGSPTKAV). A phosphoserine mark is found at serine 543 and serine 544. Acidic residues predominate over residues 545-562 (EEEEDEDDDEGEFFDCDD).

The protein belongs to the Rab3-GAP catalytic subunit family. The Rab3 GTPase-activating complex is a heterodimer composed of Rab3GAP1 and Rab3-GAP.

The protein localises to the cytoplasm. Functionally, catalytic subunit of the Rab3 GTPase-activating (Rab3GAP) complex composed of Rab3-GAP and Rab3GAP1, which has both GTPase-activating protein (GAP) activity towards Rab3, and guanine nucleotide exchange factor (GEF) activity towards Rab18. As part of the Rab3GAP complex, required for the rapid induction and sustained expression of synaptic homeostasis at the neuromuscular junction (NMJ). Also participates in the regulation of autophagy in tissues such as larval fat cells and adult muscles. The Rab3GAP complex, acts as a GAP for Rab3 by converting active Rab3-GTP to the inactive form Rab3-GDP. At the neuromuscular junction (NMJ), forms a presynaptic signaling mechanism with Rab3 that regulates progression of synaptic homeostasis at a late stage of vesicle release. Within this mechanism Rab3-GTP acts, directly or indirectly, to inhibit the progression of synaptic homeostasis, and Rab3-GAP functions to inactivate this action of Rab3-GTP. The Rab3GAP complex, acts as a GEF for Rab18 by promoting the conversion of inactive Rab18-GDP to the active form Rab18-GTP. Regulates autophagy as part of a Rab3GAP-Rab18 module. Once Rab18 is activated by the GEF Rab3GAP complex, the Rab3GAP-Rab18 module localizes to autophagosomes, and regulates autolysosome formation and maturation together with the Rab18 interacting effector, the PI3K/Vps34 Complex I. The chain is Rab3 GTPase-activating protein catalytic subunit from Drosophila melanogaster (Fruit fly).